The chain runs to 662 residues: Zinc finger protein 800 (662 aa).

Residues 69–91 form a C2H2-type 1; degenerate zinc finger; sequence FECKLCRSLFRGLPNLITHKKFY. A Glycyl lysine isopeptide (Lys-Gly) (interchain with G-Cter in SUMO2) cross-link involves residue lysine 132. Disordered stretches follow at residues 172–197 and 205–224; these read ETSS…PPSI and AAPT…TSDS. The segment covering 205–216 has biased composition (low complexity); the sequence is AAPTEEQPQESQ. A C2H2-type 2 zinc finger spans residues 231–254; sequence LICCLCRKEFNSRRGVRRHIRKVH. A Glycyl lysine isopeptide (Lys-Gly) (interchain with G-Cter in SUMO2) cross-link involves residue lysine 280. A C2H2-type 3 zinc finger spans residues 288–311; that stretch reads RSCPVCCKSFATKANVRRHFDEVH. Serine 318 bears the Phosphoserine mark. The interval 319 to 349 is disordered; sequence ITPDIATKPGQPLFLDSASPKKSFKTRKQKS. Threonine 320 carries the phosphothreonine modification. Serine 337 carries the post-translational modification Phosphoserine. Residues 340–349 are compositionally biased toward basic residues; it reads KSFKTRKQKS. Residues 357–382 form a C2H2-type 4 zinc finger; the sequence is TACKCLLCKRKYSSQIMLKRHMQIVH. Positions 389 to 473 are disordered; the sequence is ANSKREKGPN…AGGQQKTRKP (85 aa). Residue lysine 392 forms a Glycyl lysine isopeptide (Lys-Gly) (interchain with G-Cter in SUMO2) linkage. Residues 414–434 are compositionally biased toward polar residues; sequence VESSPPSITHSPQNELKGTNH. Phosphoserine occurs at positions 420, 424, 453, 455, 458, and 460. A compositionally biased stretch (low complexity) spans 456–468; it reads PKSASPSAAGGQQ. Residue lysine 474 forms a Glycyl lysine isopeptide (Lys-Gly) (interchain with G-Cter in SUMO2) linkage. 2 consecutive C2H2-type zinc fingers follow at residues 484-506 and 517-540; these read LYCK…IELH and YKCP…TVVH. Disordered stretches follow at residues 573-597 and 633-662; these read RGPS…PSKK and HHKK…KALV. The span at 575 to 587 shows a compositional bias: basic and acidic residues; that stretch reads PSREEAKHNDSKQ. A Glycyl lysine isopeptide (Lys-Gly) (interchain with G-Cter in SUMO2) cross-link involves residue lysine 597. A C2H2-type 7 zinc finger spans residues 616–638; it reads HRCNKCGKAFAKKTYLEHHKKTH. The span at 651–662 shows a compositional bias: basic residues; that stretch reads TKGRSTRSKALV.

This sequence belongs to the krueppel C2H2-type zinc-finger protein family.

The protein localises to the nucleus. Its function is as follows. May be involved in transcriptional regulation. The chain is Zinc finger protein 800 (Znf800) from Mus musculus (Mouse).